Consider the following 166-residue polypeptide: Large ribosomal subunit protein uL10 (166 aa).

Belongs to the universal ribosomal protein uL10 family. As to quaternary structure, part of the ribosomal stalk of the 50S ribosomal subunit. The N-terminus interacts with L11 and the large rRNA to form the base of the stalk. The C-terminus forms an elongated spine to which L12 dimers bind in a sequential fashion forming a multimeric L10(L12)X complex.

Its function is as follows. Forms part of the ribosomal stalk, playing a central role in the interaction of the ribosome with GTP-bound translation factors. The polypeptide is Large ribosomal subunit protein uL10 (Neisseria gonorrhoeae (strain ATCC 700825 / FA 1090)).